The sequence spans 226 residues: Beta-casein (226 aa).

A signal peptide spans 1–15; it reads MKVLILACLVALALA. T18 carries the post-translational modification Phosphothreonine; in form 5-P. Residue S21 is modified to Phosphoserine; in form 4-P and form 5-P. A Phosphoserine; in form 3-P, form 4-P and form 5-P modification is found at S23. S24 and S25 each carry phosphoserine; in form 1-P, form 2-P, form 3-P, form 4-P and form 5-P.

This sequence belongs to the beta-casein family. Post-translationally, form 1-P is phosphorylated once; half of the molecules are phosphorylated on Ser-24, half on Ser-25. As to expression, mammary gland specific. Secreted in milk.

Its subcellular location is the secreted. Functionally, important role in determination of the surface properties of the casein micelles. In Homo sapiens (Human), this protein is Beta-casein (CSN2).